The primary structure comprises 319 residues: GTP 3',8-cyclase (319 aa).

One can recognise a Radical SAM core domain in the interval 4-219 (KHGRKINYLR…SKHSDLIPVE (216 aa)). Arg-13 contacts GTP. Residues Cys-20 and Cys-24 each coordinate [4Fe-4S] cluster. Position 26 (Tyr-26) interacts with S-adenosyl-L-methionine. Cys-27 contacts [4Fe-4S] cluster. Arg-63 lines the GTP pocket. Position 67 (Gly-67) interacts with S-adenosyl-L-methionine. Thr-94 serves as a coordination point for GTP. Residue Ser-118 participates in S-adenosyl-L-methionine binding. Residue Lys-155 participates in GTP binding. An S-adenosyl-L-methionine-binding site is contributed by Met-189. [4Fe-4S] cluster is bound by residues Cys-249 and Cys-252. Position 254 to 256 (254 to 256 (RVR)) interacts with GTP. Position 266 (Cys-266) interacts with [4Fe-4S] cluster.

Belongs to the radical SAM superfamily. MoaA family. As to quaternary structure, monomer and homodimer. [4Fe-4S] cluster is required as a cofactor.

It catalyses the reaction GTP + AH2 + S-adenosyl-L-methionine = (8S)-3',8-cyclo-7,8-dihydroguanosine 5'-triphosphate + 5'-deoxyadenosine + L-methionine + A + H(+). Its pathway is cofactor biosynthesis; molybdopterin biosynthesis. Its function is as follows. Catalyzes the cyclization of GTP to (8S)-3',8-cyclo-7,8-dihydroguanosine 5'-triphosphate. The polypeptide is GTP 3',8-cyclase (Clostridium botulinum (strain Okra / Type B1)).